The sequence spans 168 residues: Protein OPG162 (168 aa).

Topologically, residues 1–14 are intravirion; sequence MKSLNRQTVSRFKK. A helical membrane pass occupies residues 15–37; the sequence is LSVPAAIMMILSTIISGIGTFLH. Residues 38 to 168 are Virion surface-facing; it reads YKEELMPSAC…SVLCVKKFYK (131 aa). Residues 54–163 enclose the C-type lectin domain; it reads YDKHCYLDTN…CKSTQSVLCV (110 aa). 2 disulfides stabilise this stretch: cysteine 75–cysteine 162 and cysteine 141–cysteine 154. An N-linked (GlcNAc...) asparagine; by host glycan is attached at asparagine 133.

It belongs to the orthopoxvirus OPG162 protein family. Interacts with protein OPG161. Interacts with protein OPG164. Interacts with protein OPG190.

The protein localises to the virion membrane. It localises to the host Golgi apparatus. Its function is as follows. Forms a complex with OPG162 and OPG190 to coordinate the incorporation of OPG164 into wrapped enveloped virion (EV) membranes and, subsequently, the production of actin tails. Therefore plays an essential role in efficient cell-to-cell spread of viral particles. This Vaccinia virus (strain Western Reserve) (VACV) protein is Protein OPG162 (OPG162).